The sequence spans 368 residues: MNERIFRENTRPVQVGNLTIGGSEELTIQSMTTTKTHDVEATVAEIHRLEEVGCQIVRVACPDERAANALSAIKKRIHIPLVADIHFDYRLALKAIDAGVDKIRINPGNIGRRDRVEKVVNAAKAKNIPIRIGVNAGSLEKKIIQKYGYPTAEGMVESALDHIKILEDLDFYDIIVSLKASDVNLAIEAYDKASRAFNYPLHLGITESGTQFAGGIKSAAGLGAILSLGIGNTLRVSLSADPVEEIKVAREVLKSFGLSSNAAMLISCPTCGRIEIDLIRIANEVENYIATIKAPIKVAVLGCAVNGPGEAREADIGIAGSNGEGLLFRHGKIIRKVPEAIMVEELKKEIDILAEEYFEKKTDLESLR.

[4Fe-4S] cluster-binding residues include Cys-268, Cys-271, Cys-303, and Glu-310.

This sequence belongs to the IspG family. It depends on [4Fe-4S] cluster as a cofactor.

The catalysed reaction is (2E)-4-hydroxy-3-methylbut-2-enyl diphosphate + oxidized [flavodoxin] + H2O + 2 H(+) = 2-C-methyl-D-erythritol 2,4-cyclic diphosphate + reduced [flavodoxin]. The protein operates within isoprenoid biosynthesis; isopentenyl diphosphate biosynthesis via DXP pathway; isopentenyl diphosphate from 1-deoxy-D-xylulose 5-phosphate: step 5/6. Its function is as follows. Converts 2C-methyl-D-erythritol 2,4-cyclodiphosphate (ME-2,4cPP) into 1-hydroxy-2-methyl-2-(E)-butenyl 4-diphosphate. The sequence is that of 4-hydroxy-3-methylbut-2-en-1-yl diphosphate synthase (flavodoxin) from Listeria monocytogenes serotype 4b (strain CLIP80459).